Reading from the N-terminus, the 352-residue chain is Biotin synthase (352 aa).

Positions 44–262 (NRVQVSTLLS…LAVARILMPK (219 aa)) constitute a Radical SAM core domain. Cysteine 59, cysteine 63, and cysteine 66 together coordinate [4Fe-4S] cluster. Positions 103, 134, 194, and 266 each coordinate [2Fe-2S] cluster.

The protein belongs to the radical SAM superfamily. Biotin synthase family. In terms of assembly, homodimer. It depends on [4Fe-4S] cluster as a cofactor. [2Fe-2S] cluster is required as a cofactor.

The enzyme catalyses (4R,5S)-dethiobiotin + (sulfur carrier)-SH + 2 reduced [2Fe-2S]-[ferredoxin] + 2 S-adenosyl-L-methionine = (sulfur carrier)-H + biotin + 2 5'-deoxyadenosine + 2 L-methionine + 2 oxidized [2Fe-2S]-[ferredoxin]. It participates in cofactor biosynthesis; biotin biosynthesis; biotin from 7,8-diaminononanoate: step 2/2. In terms of biological role, catalyzes the conversion of dethiobiotin (DTB) to biotin by the insertion of a sulfur atom into dethiobiotin via a radical-based mechanism. The polypeptide is Biotin synthase (Pseudomonas syringae pv. syringae (strain B728a)).